Here is a 303-residue protein sequence, read N- to C-terminus: Protein bottleneck (303 aa).

2 disordered regions span residues 102 to 142 (SKRN…PTVT) and 185 to 272 (VATT…ASVR). Low complexity-rich tracts occupy residues 115–138 (RQQE…QQQE) and 185–197 (VATT…TANS). Polar residues predominate over residues 260 to 272 (ATISRQSSSASVR).

As to expression, restricted to the blastoderm.

The protein resides in the cytoplasm. The protein localises to the cytoskeleton. In terms of biological role, acts as a regulator of the microfilament network governing cellularization of the embryo. Determines the timing of a key conformational transition in the cortical microfilament network: the proper coordination of membrane invagination and basal closure of the cells. To do this, bnk possibly physically links neighboring contractile units of the early cycle 14 microfilament network in a manner that prevents basal constriction until the proper stage has been reached. Bnk together with nullo and Sry-alpha may provide auxiliary functions, by acting both to stabilize a large and dynamic microfilament structure and regulate its functions. The polypeptide is Protein bottleneck (bnk) (Drosophila melanogaster (Fruit fly)).